We begin with the raw amino-acid sequence, 243 residues long: Protein HUA2 (243 aa).

It localises to the cytoplasm. Functionally, may have a role in actin patch assembly. This chain is Protein HUA2 (HUA2), found in Saccharomyces cerevisiae (strain ATCC 204508 / S288c) (Baker's yeast).